The chain runs to 209 residues: ATP-dependent dethiobiotin synthetase BioD (209 aa).

13-18 (DIGKTV) contributes to the ATP binding site. T17 serves as a coordination point for Mg(2+). K33 is a catalytic residue. R47 and E100 together coordinate Mg(2+). ATP is bound by residues 100–103 (EGAG) and 184–186 (PRL).

It belongs to the dethiobiotin synthetase family. As to quaternary structure, homodimer. Mg(2+) is required as a cofactor.

Its subcellular location is the cytoplasm. It catalyses the reaction (7R,8S)-7,8-diammoniononanoate + CO2 + ATP = (4R,5S)-dethiobiotin + ADP + phosphate + 3 H(+). The protein operates within cofactor biosynthesis; biotin biosynthesis; biotin from 7,8-diaminononanoate: step 1/2. Catalyzes a mechanistically unusual reaction, the ATP-dependent insertion of CO2 between the N7 and N8 nitrogen atoms of 7,8-diaminopelargonic acid (DAPA, also called 7,8-diammoniononanoate) to form a ureido ring. The chain is ATP-dependent dethiobiotin synthetase BioD from Rhodopseudomonas palustris (strain BisB18).